The chain runs to 262 residues: ATP synthase subunit a (262 aa).

The next 5 membrane-spanning stretches (helical) occupy residues 25–45 (NVHI…LAVF), 86–106 (VAPL…IDLI), 130–150 (DISA…FYTV), 204–226 (LIFI…GIPL), and 240–260 (LQAF…YNKA).

It belongs to the ATPase A chain family. In terms of assembly, F-type ATPases have 2 components, CF(1) - the catalytic core - and CF(0) - the membrane proton channel. CF(1) has five subunits: alpha(3), beta(3), gamma(1), delta(1), epsilon(1). CF(0) has three main subunits: a(1), b(2) and c(9-12). The alpha and beta chains form an alternating ring which encloses part of the gamma chain. CF(1) is attached to CF(0) by a central stalk formed by the gamma and epsilon chains, while a peripheral stalk is formed by the delta and b chains.

The protein localises to the cell inner membrane. Its function is as follows. Key component of the proton channel; it plays a direct role in the translocation of protons across the membrane. The sequence is that of ATP synthase subunit a from Mannheimia succiniciproducens (strain KCTC 0769BP / MBEL55E).